A 309-amino-acid polypeptide reads, in one-letter code: Mitochondrial import receptor subunit TOM34 (309 aa).

Ser-8 carries the post-translational modification Phosphoserine. TPR repeat units lie at residues 9-42 (VEQL…LQAR), 51-84 (SVLY…VPFS), and 86-118 (KPLL…DNSV). Residues 158-187 (WSSLPSENHKETAKSKSKETTATKNRVPSA) form a disordered region. The residue at position 160 (Ser-160) is a Phosphoserine. Residues 164-178 (ENHKETAKSKSKETT) show a composition bias toward basic and acidic residues. A Phosphoserine modification is found at Ser-186. TPR repeat units follow at residues 193–226 (ARVL…SSLE), 227–260 (SATY…DGKN), and 262–294 (KAFY…EPRN). Lys-197 is covalently cross-linked (Glycyl lysine isopeptide (Lys-Gly) (interchain with G-Cter in SUMO2)).

It belongs to the Tom34 family. As to quaternary structure, interacts with HSP90A, VCP, ATP6V1D, KIAA0665, AMPK, and DMAP1 through its TPR repeat.

It is found in the cytoplasm. Its subcellular location is the mitochondrion outer membrane. Functionally, plays a role in the import of cytosolically synthesized preproteins into mitochondria. Binds the mature portion of precursor proteins. Interacts with cellular components, and possesses weak ATPase activity. May be a chaperone-like protein that helps to keep newly synthesized precursors in an unfolded import compatible state. This is Mitochondrial import receptor subunit TOM34 (Tomm34) from Rattus norvegicus (Rat).